The primary structure comprises 270 residues: Putative phosphoenolpyruvate synthase regulatory protein (270 aa).

150 to 157 (GVSRCGKT) lines the ADP pocket.

The protein belongs to the pyruvate, phosphate/water dikinase regulatory protein family. PSRP subfamily.

It carries out the reaction [pyruvate, water dikinase] + ADP = [pyruvate, water dikinase]-phosphate + AMP + H(+). The enzyme catalyses [pyruvate, water dikinase]-phosphate + phosphate + H(+) = [pyruvate, water dikinase] + diphosphate. Bifunctional serine/threonine kinase and phosphorylase involved in the regulation of the phosphoenolpyruvate synthase (PEPS) by catalyzing its phosphorylation/dephosphorylation. The protein is Putative phosphoenolpyruvate synthase regulatory protein of Shewanella frigidimarina (strain NCIMB 400).